Consider the following 486-residue polypeptide: uncharacterized protein (486 aa).

The protein belongs to the UbiD family.

This is an uncharacterized protein from Aquifex aeolicus (strain VF5).